We begin with the raw amino-acid sequence, 450 residues long: tRNA-2-methylthio-N(6)-dimethylallyladenosine synthase (450 aa).

The region spanning 8–128 is the MTTase N-terminal domain; that stretch reads KRLYIKTYGC…LPELIARAHR (121 aa). Residues cysteine 17, cysteine 53, cysteine 91, cysteine 166, cysteine 170, and cysteine 173 each coordinate [4Fe-4S] cluster. One can recognise a Radical SAM core domain in the interval 152–382; the sequence is RPTGVTAFLT…QALLEQQQLA (231 aa). The region spanning 385–447 is the TRAM domain; that stretch reads AAQAGRVLPV…RNSLAGVLEL (63 aa).

It belongs to the methylthiotransferase family. MiaB subfamily. Monomer. The cofactor is [4Fe-4S] cluster.

The protein localises to the cytoplasm. It catalyses the reaction N(6)-dimethylallyladenosine(37) in tRNA + (sulfur carrier)-SH + AH2 + 2 S-adenosyl-L-methionine = 2-methylsulfanyl-N(6)-dimethylallyladenosine(37) in tRNA + (sulfur carrier)-H + 5'-deoxyadenosine + L-methionine + A + S-adenosyl-L-homocysteine + 2 H(+). Catalyzes the methylthiolation of N6-(dimethylallyl)adenosine (i(6)A), leading to the formation of 2-methylthio-N6-(dimethylallyl)adenosine (ms(2)i(6)A) at position 37 in tRNAs that read codons beginning with uridine. This is tRNA-2-methylthio-N(6)-dimethylallyladenosine synthase from Phenylobacterium zucineum (strain HLK1).